The chain runs to 400 residues: Casein kinase I homolog hhp2 (400 aa).

One can recognise a Protein kinase domain in the interval 12–278 (YRIGRKIGSG…YLRKLFRDLL (267 aa)). ATP-binding positions include 18–26 (IGSGSFGQI) and Lys-41. Asp-131 (proton acceptor) is an active-site residue. Positions 330–352 (PNYSSIPLPAERNPKTPQSFSTN) are disordered.

This sequence belongs to the protein kinase superfamily. CK1 Ser/Thr protein kinase family. Casein kinase I subfamily.

The protein resides in the nucleus. It carries out the reaction L-seryl-[protein] + ATP = O-phospho-L-seryl-[protein] + ADP + H(+). The enzyme catalyses L-threonyl-[protein] + ATP = O-phospho-L-threonyl-[protein] + ADP + H(+). Its function is as follows. Involved in DNA repair. May regulate the activity of protein(s) involved in double strand break repair caused by gamma rays. This Schizosaccharomyces pombe (strain 972 / ATCC 24843) (Fission yeast) protein is Casein kinase I homolog hhp2 (hhp2).